We begin with the raw amino-acid sequence, 185 residues long: UPF0397 protein CPF_1836 (185 aa).

The next 5 helical transmembrane spans lie at 11 to 31, 44 to 64, 71 to 91, 111 to 131, and 149 to 169; these read IVAIGIGSAVFMILGRFGSLP, AFLALMALLYGPLAGFLIGFI, IVFFGSPWISWVFASGIVGLI, IFMFNLIQIIANGVAWFLVAP, and GVIGGISNMVTVGVLGTILIA.

Belongs to the UPF0397 family.

It is found in the cell membrane. The polypeptide is UPF0397 protein CPF_1836 (Clostridium perfringens (strain ATCC 13124 / DSM 756 / JCM 1290 / NCIMB 6125 / NCTC 8237 / Type A)).